Consider the following 266-residue polypeptide: Small ribosomal subunit protein uS2 (266 aa).

A disordered region spans residues 233-266; it reads AVREEEFASAPDAGKKGRQAQPKKGKRASDAAAE. Over residues 248–258 the composition is skewed to basic residues; sequence KGRQAQPKKGK.

The protein belongs to the universal ribosomal protein uS2 family.

The sequence is that of Small ribosomal subunit protein uS2 from Xylella fastidiosa (strain M23).